Reading from the N-terminus, the 199-residue chain is MTMDALSRLVEALRCLPGVGPKSAQRMVFHLLQHQRQRGLHLASCLEQAMKHISHCQQCNNYTEQTLCALCQNPNRDSTLLCVVESPADVSAIEQSNSFQGKYFVLMGKISPLDGLGPDDIGLPKLKELITREKIQEVILALSPSVESQTTIHFIHQLLKDETVNISQLAHGIPSGGELEFLDGNTISSALKNRAVINV.

The C4-type zinc-finger motif lies at 56–71 (CQQCNNYTEQTLCALC). A Toprim domain is found at 79–174 (TLLCVVESPA…NISQLAHGIP (96 aa)).

This sequence belongs to the RecR family.

Functionally, may play a role in DNA repair. It seems to be involved in an RecBC-independent recombinational process of DNA repair. It may act with RecF and RecO. The protein is Recombination protein RecR of Legionella pneumophila subsp. pneumophila (strain Philadelphia 1 / ATCC 33152 / DSM 7513).